Reading from the N-terminus, the 945-residue chain is Xylosyltransferase 1 (945 aa).

The Cytoplasmic segment spans residues 1 to 17 (MQAAPCARRLARRSHSA). A helical; Signal-anchor for type II membrane protein transmembrane segment spans residues 18–38 (LLAALTVLLLQTLVVWNFSSL). At 39-945 (DSGAGERRGG…GAVKPDGRLR (907 aa)) the chain is on the lumenal side. Positions 42–245 (AGERRGGAAV…KYDQPPKCDI (204 aa)) are disordered. Gly residues predominate over residues 76–103 (RGGGGGGGGCGGGGRGPQARARGGGPGE). The span at 131–147 (KVRTDSNNENSVPKDFE) shows a compositional bias: basic and acidic residues. Residues 149–158 (VDNSNFAPRT) are compositionally biased toward polar residues. The segment covering 163 to 190 (HQPELAKKPPSRQKELLKRKLEQQEKGK) has biased composition (basic and acidic residues). Asn-212 carries an N-linked (GlcNAc...) asparagine glycan. A compositionally biased stretch (basic and acidic residues) spans 235–245 (TKYDQPPKCDI). 4 disulfide bridges follow: Cys-243/Cys-271, Cys-287/Cys-528, Cys-547/Cys-560, and Cys-549/Cys-558. UDP-alpha-D-xylose-binding positions include Val-319, Asp-347, and 376–378 (TIW). Residue Asn-407 is glycosylated (N-linked (GlcNAc...) asparagine). 480–481 (DW) provides a ligand contact to UDP-alpha-D-xylose. UDP-alpha-D-xylose is bound by residues Ser-561 and 584–585 (RK). Cystine bridges form between Cys-661–Cys-913 and Cys-906–Cys-919. A glycan (N-linked (GlcNAc...) asparagine) is linked at Asn-763. Residues 926-945 (SFSPDPKSELGAVKPDGRLR) are disordered.

It belongs to the glycosyltransferase 14 family. XylT subfamily. Monomer. A divalent metal cation serves as cofactor. Post-translationally, contains 7 disulfide bonds. N-glycosylated.

The protein localises to the golgi apparatus membrane. It carries out the reaction UDP-alpha-D-xylose + L-seryl-[protein] = 3-O-(beta-D-xylosyl)-L-seryl-[protein] + UDP + H(+). It functions in the pathway glycan metabolism; chondroitin sulfate biosynthesis. It participates in glycan metabolism; heparan sulfate biosynthesis. In terms of biological role, catalyzes the first step in the biosynthesis of chondroitin sulfate and dermatan sulfate proteoglycans, such as DCN. Transfers D-xylose from UDP-D-xylose to specific serine residues of the core protein. Required for normal maturation of chondrocytes during bone development, normal onset of ossification and normal embryonic and postnatal skeleton development, especially of the long bones. The protein is Xylosyltransferase 1 (XYLT1) of Pan troglodytes (Chimpanzee).